The chain runs to 491 residues: Ketol-acid reductoisomerase (NADP(+)) (491 aa).

A KARI N-terminal Rossmann domain is found at 15 to 208; the sequence is AQLGKCRFMG…GGHRAGVLES (194 aa). NADP(+) contacts are provided by residues 45–48, Arg68, Arg76, Ser78, and 108–110; these read CGAQ and DKQ. Residue His132 is part of the active site. Gly158 contributes to the NADP(+) binding site. KARI C-terminal knotted domains are found at residues 209–344 and 345–484; these read SFVA…TAPQ and YEGK…MTDM. Positions 217, 221, 389, and 393 each coordinate Mg(2+). Substrate is bound at residue Ser414.

This sequence belongs to the ketol-acid reductoisomerase family. The cofactor is Mg(2+).

It carries out the reaction (2R)-2,3-dihydroxy-3-methylbutanoate + NADP(+) = (2S)-2-acetolactate + NADPH + H(+). The catalysed reaction is (2R,3R)-2,3-dihydroxy-3-methylpentanoate + NADP(+) = (S)-2-ethyl-2-hydroxy-3-oxobutanoate + NADPH + H(+). It functions in the pathway amino-acid biosynthesis; L-isoleucine biosynthesis; L-isoleucine from 2-oxobutanoate: step 2/4. Its pathway is amino-acid biosynthesis; L-valine biosynthesis; L-valine from pyruvate: step 2/4. Functionally, involved in the biosynthesis of branched-chain amino acids (BCAA). Catalyzes an alkyl-migration followed by a ketol-acid reduction of (S)-2-acetolactate (S2AL) to yield (R)-2,3-dihydroxy-isovalerate. In the isomerase reaction, S2AL is rearranged via a Mg-dependent methyl migration to produce 3-hydroxy-3-methyl-2-ketobutyrate (HMKB). In the reductase reaction, this 2-ketoacid undergoes a metal-dependent reduction by NADPH to yield (R)-2,3-dihydroxy-isovalerate. In Escherichia coli (strain ATCC 8739 / DSM 1576 / NBRC 3972 / NCIMB 8545 / WDCM 00012 / Crooks), this protein is Ketol-acid reductoisomerase (NADP(+)).